The sequence spans 500 residues: Catalase (500 aa).

Active-site residues include His-59 and Asn-131. Tyr-339 lines the heme pocket.

Belongs to the catalase family. It depends on heme as a cofactor.

The catalysed reaction is 2 H2O2 = O2 + 2 H2O. Functionally, decomposes hydrogen peroxide into water and oxygen; serves to protect cells from the toxic effects of hydrogen peroxide. The sequence is that of Catalase (katA) from Neisseria gonorrhoeae.